A 66-amino-acid chain; its full sequence is Large ribosomal subunit protein bL33c (66 aa).

The protein belongs to the bacterial ribosomal protein bL33 family.

Its subcellular location is the plastid. It localises to the chloroplast. The polypeptide is Large ribosomal subunit protein bL33c (Dioscorea elephantipes (Elephant's foot yam)).